The sequence spans 421 residues: Phosphoglycerate kinase, cytosolic (421 aa).

(2R)-3-phosphoglycerate contacts are provided by Val23, Asp24, Phe25, Asn26, Arg39, Ser61, His62, Gly64, Arg65, Arg135, His172, and Arg173. The ADP site is built by Gly218 and Ala219. Gly218 provides a ligand contact to CDP. Positions 219 and 220 each coordinate AMP. Ala219 is an ATP binding site. Residue Ala219 participates in Mg(2+) binding. Lys220 contributes to the (2R)-3-phosphoglycerate binding site. Asp223 provides a ligand contact to CDP. Asp223 lines the Mg(2+) pocket. Residues Lys224 and Gly242 each contribute to the ADP site. Lys224 serves as a coordination point for AMP. Position 224 (Lys224) interacts with ATP. Gly242 provides a ligand contact to CDP. AMP is bound by residues Ala243 and Ala315. ATP is bound by residues Ala243 and Ala315. The ADP site is built by Ala315 and Asn339. CDP is bound by residues Gly340 and Phe345. Positions 345, 346, 378, and 379 each coordinate ADP. Glu346 is a binding site for AMP. Residues Glu346, Asp378, and Ser379 each contribute to the ATP site. Position 378 (Asp378) interacts with Mg(2+).

This sequence belongs to the phosphoglycerate kinase family. As to quaternary structure, monomer. It depends on Mg(2+) as a cofactor.

The protein localises to the cytoplasm. The enzyme catalyses (2R)-3-phosphoglycerate + ATP = (2R)-3-phospho-glyceroyl phosphate + ADP. The protein operates within carbohydrate degradation; glycolysis; pyruvate from D-glyceraldehyde 3-phosphate: step 2/5. The protein is Phosphoglycerate kinase, cytosolic of Trypanosoma brucei brucei.